Reading from the N-terminus, the 810-residue chain is MAQHLLHGTLHATIYEVDDLHTGGLRSGFFGKILANVEETIGVGKGETQLYATIDLQRARVGRTRKIKDEAKNPKWYESFHIYCAHLASDIIFTVKDDNPIGATLIGRAYVPVDQVIHGEEVDQWVEILDNDRNPIHGGSKIHVKLQYFGVEADRNWNQGIKSAKFPGVPYTFFSQRQGCKVSLYQDAHIPDNFVPRIPLAGGKNYEPQRCWEDIFDAISNAQHMIYITGWSVYTEIALVRDSRRPKPGGDVTVGELLKKKASEGVRVLLLVWDDRTSVDVLKKDGLMATHDEETENFFRGSDVHCILCPRNPDDGGSIVQNLQVSAMFTHHQKIVVVDSEMPSRGGSQMRRIVSFVGGIDLCDGRYDTPFHSLFRTLDTVHHDDFHQPNFTGAAITKGGPREPWHDIHSRLEGPIAWDVLYNFEQRWSKQGGKDILVKLRELSDIIITPSPVMFQEDHDVWNVQLFRSIDGGAAAGFPESPEAAAEAGLVSGKDNIIDRSIQDAYIHAIRRAKDFIYIENQYFLGSSFAWAADGITPEDINALHLIPKELSLKIVSKIEKGEKFRVYVVVPMWPEGLPESASVQAILDWQRRTMQMMYKDIVQALRAQGLEEDPRNYLTFFCLGNREVKKEGEYEPAERPDADSSYMKAQEARRFMIYVHTKMMIVDDEYIIIGSANINQRSMDGARDSEIAMGGYQPHHLSHRQPARGQIHGFRMSLWYEHLGMLDETFLDPSSVECIEKVNRISDKYWDLYSSESLEHDLPGHLLRYPVDVDGEGDVTEFPGFEFFPDTKARILGTKSDYLPPILTT.

Residues 1 to 36 constitute a propeptide that is removed on maturation; the sequence is MAQHLLHGTLHATIYEVDDLHTGGLRSGFFGKILAN. The C2 domain occupies 1–126; the sequence is MAQHLLHGTL…IHGEEVDQWV (126 aa). D187 contacts Ca(2+). The PLD phosphodiesterase 1 domain occupies 327 to 366; sequence AMFTHHQKIVVVDSEMPSRGGSQMRRIVSFVGGIDLCDGR. Residues H332, K334, and D339 contribute to the active site. H332 is a binding site for a 1,2-diacyl-sn-glycero-3-phosphate. Residues H372 and H406 each coordinate Ca(2+). A 1,2-diacyl-sn-glycero-3-phosphate-binding residues include Q522 and H661. The PLD phosphodiesterase 2 domain maps to 656 to 683; the sequence is FMIYVHTKMMIVDDEYIIIGSANINQRS. Catalysis depends on residues H661, K663, and D668. Position 722 (E722) interacts with Ca(2+).

The protein belongs to the phospholipase D family. C2-PLD subfamily. Ca(2+) is required as a cofactor.

It localises to the cytoplasm. The protein resides in the membrane. It carries out the reaction a 1,2-diacyl-sn-glycero-3-phosphocholine + H2O = a 1,2-diacyl-sn-glycero-3-phosphate + choline + H(+). In terms of biological role, hydrolyzes glycerol-phospholipids at the terminal phosphodiesteric bond. Plays an important role in various cellular processes, including phytohormone action, vesicular trafficking, secretion, cytoskeletal arrangement, meiosis, tumor promotion, pathogenesis, membrane deterioration and senescence. In Brassica oleracea var. capitata (Cabbage), this protein is Phospholipase D alpha 1 (PLD1).